The chain runs to 271 residues: Cytochrome b termination protein 1 (271 aa).

It localises to the mitochondrion. In terms of biological role, involved in 5'-end processing of mitochondrial COB, 15S rRNA, and RPM1 transcript. May also have a role in 3'-end processing of the COB pre-mRNA. This is Cytochrome b termination protein 1 (CBT1) from Saccharomyces cerevisiae (strain ATCC 204508 / S288c) (Baker's yeast).